The following is a 362-amino-acid chain: Outer membrane porin F (362 aa).

Residues 1 to 22 (MMKRNILAVIVPALLVAGTANA) form the signal peptide.

It belongs to the Gram-negative porin family. As to quaternary structure, homotrimer. Forms mixed heterotrimers with OmpC; other mixed heterotrimers are also probable.

The protein resides in the cell outer membrane. Forms pores that allow passive diffusion of small molecules across the outer membrane. In terms of biological role, (Microbial infection) Is the major receptor for colicin E5. Its function is as follows. (Microbial infection) A mixed OmpC-OmpF heterotrimer is the outer membrane receptor for toxin CdiA-EC536. The protein is Outer membrane porin F (ompF) of Escherichia coli O6:K15:H31 (strain 536 / UPEC).